The sequence spans 166 residues: Protein BioX (166 aa).

5 helical membrane passes run 12–32 (ISLLACLIIVTGMFKIPTGIP), 33–53 (GSEFQLSAPIAVAIAAVFGFK), 55–75 (YFLAGIIASLILFLLGIHSIL), 87–107 (VGLIIVLLGTSIPVLVVAGPI), and 117–137 (AFTLGTPFLPLFVLAIPGMVI).

The protein localises to the cell membrane. Its function is as follows. Does not seem to be a permease of pimelate. Its role in biotin synthesis is not clear. The sequence is that of Protein BioX (bioX) from Lysinibacillus sphaericus (Bacillus sphaericus).